The sequence spans 158 residues: Immunoglobulin J chain (158 aa).

An N-terminal signal peptide occupies residues 1-22; sequence MKNHLFFWGVLAIFVQAVLVTA. Disulfide bonds link C36–C122, C95–C115, and C130–C155. N72 is a glycosylation site (N-linked (GlcNAc...) (complex) asparagine).

As to quaternary structure, part of the secretory IgA (sIgA) complex that consists of two, four or five IgA monomers, and two additional non-Ig polypeptides, namely the JCHAIN and the secretory component (the proteolytic product of PIGR). Part of the secretory IgM (sIgM) complex that consist of five IgM monomers, and two additional non-Ig polypeptides, namely the JCHAIN and the secretory component (the proteolytic product of PIGR). JCHAIN-containing IgM interacts (via CH4 domain) with FCRM (via Ig-like domain). In terms of processing, N-glycosylated. N-glycans attached to Asn-72 varies from truncated, differentially fucosylated to sialylated (NeuGc) complex types: Man3GlcNAc2; GlcNAc2Man3GlcNAc2(Fuc); Gal1GlcNAc1Man3GlcNAc2; GlcNAc2Man3GlcNAc2; GlcNAc1Man3GlcNAc2; GlcNAc1Man2GlcNAc2 and NeuGc1Gal1GlcNAc2Man3GlcNAc2.

Its subcellular location is the secreted. Its function is as follows. Serves to link two monomer units of either IgM or IgA. In the case of IgM, the J chain-joined dimer is a nucleating unit for the IgM pentamer, and in the case of IgA it induces dimers and/or larger polymers. It also helps to bind these immunoglobulins to secretory component. In Equus asinus (Donkey), this protein is Immunoglobulin J chain (JCHAIN).